Here is a 117-residue protein sequence, read N- to C-terminus: Holo-[acyl-carrier-protein] synthase (117 aa).

Mg(2+) is bound by residues D8 and E58.

This sequence belongs to the P-Pant transferase superfamily. AcpS family. It depends on Mg(2+) as a cofactor.

Its subcellular location is the cytoplasm. The enzyme catalyses apo-[ACP] + CoA = holo-[ACP] + adenosine 3',5'-bisphosphate + H(+). Transfers the 4'-phosphopantetheine moiety from coenzyme A to a Ser of acyl-carrier-protein. This is Holo-[acyl-carrier-protein] synthase from Latilactobacillus sakei subsp. sakei (strain 23K) (Lactobacillus sakei subsp. sakei).